A 382-amino-acid chain; its full sequence is D-alanine--D-alanine ligase (382 aa).

One can recognise an ATP-grasp domain in the interval 161–372 (KVVFEAAGLQ…YAELIDELIY (212 aa)). 193–248 (VDRLGYPVFVKPARAGSSMGISKVDSLEGLDAAIAAAREHDLKLVIEAGIVGREIE) lines the ATP pocket. 3 residues coordinate Mg(2+): D326, E339, and N341.

Belongs to the D-alanine--D-alanine ligase family. The cofactor is Mg(2+). Mn(2+) serves as cofactor.

Its subcellular location is the cytoplasm. It catalyses the reaction 2 D-alanine + ATP = D-alanyl-D-alanine + ADP + phosphate + H(+). It functions in the pathway cell wall biogenesis; peptidoglycan biosynthesis. Cell wall formation. In Arthrobacter sp. (strain FB24), this protein is D-alanine--D-alanine ligase.